Reading from the N-terminus, the 370-residue chain is Ubiquitin-binding protein Rv1468c (370 aa).

Residues 1-72 are UBA; that stretch reads MSFVVANTEF…QVLSAQAAAF (72 aa). One can recognise a PE domain in the interval 1–93; that stretch reads MSFVVANTEF…AQAYAAAEAT (93 aa).

Belongs to the mycobacterial PE family. PGRS subfamily. As to quaternary structure, interacts directly with host polyubiquitin in a UBA-dependent manner.

It localises to the secreted. The protein localises to the cell wall. It is found in the cell surface. In terms of biological role, mediates direct binding of host ubiquitin (Ub) to the mycobacterial surface, which triggers host xenophagy. Interaction between Rv1468c and ubiquitin recruits autophagy receptor p62 to deliver mycobacteria into LC3-associated autophagosomes. It could be a viable evolutionary strategy adopted by M.tuberculosis to maintain long-term intracellular survival through self-controlling its intracellular bacterial loads to avoid excessive host inflammatory immune responses. The chain is Ubiquitin-binding protein Rv1468c from Mycobacterium tuberculosis (strain ATCC 25618 / H37Rv).